Here is a 562-residue protein sequence, read N- to C-terminus: Acetolactate synthase isozyme 1 large subunit (562 aa).

Glu-60 contributes to the thiamine diphosphate binding site. FAD contacts are provided by residues Arg-162, 264–285, and 307–326; these read HGVRSTNYILQEADLLIVLGAR and DIDRAELGKIKQPHVAIQAD. A thiamine pyrophosphate binding region spans residues 393 to 473; it reads QHQMWTAQAY…VKIILMNNEA (81 aa). Positions 444 and 471 each coordinate Mg(2+).

The protein belongs to the TPP enzyme family. Dimer of large and small chains. Requires Mg(2+) as cofactor. The cofactor is thiamine diphosphate.

It carries out the reaction 2 pyruvate + H(+) = (2S)-2-acetolactate + CO2. The protein operates within amino-acid biosynthesis; L-isoleucine biosynthesis; L-isoleucine from 2-oxobutanoate: step 1/4. It participates in amino-acid biosynthesis; L-valine biosynthesis; L-valine from pyruvate: step 1/4. The protein is Acetolactate synthase isozyme 1 large subunit (ilvB) of Escherichia coli (strain K12).